The sequence spans 383 residues: Protein delta homolog 2 (383 aa).

The N-terminal stretch at 1-26 (MPSGCRCLHLVCLLCILGAPGQPVRA) is a signal peptide. 4 consecutive EGF-like domains span residues 27 to 58 (DDCS…LHCE), 62 to 89 (RMPG…KFCD), 91 to 129 (DEHI…RDCE), and 131 to 172 (KAGP…ARCE). Residues 27-306 (DDCSSHCDLA…RQEAGLGEPS (280 aa)) lie on the Extracellular side of the membrane. Cystine bridges form between Cys-29-Cys-40, Cys-33-Cys-46, Cys-48-Cys-57, Cys-66-Cys-71, Cys-79-Cys-88, Cys-95-Cys-107, Cys-101-Cys-117, Cys-119-Cys-128, Cys-135-Cys-148, Cys-142-Cys-160, Cys-162-Cys-171, Cys-178-Cys-189, Cys-183-Cys-198, Cys-200-Cys-209, Cys-216-Cys-227, Cys-221-Cys-236, and Cys-238-Cys-247. Asn-157 is a glycosylation site (N-linked (GlcNAc...) asparagine). In terms of domain architecture, EGF-like 5; calcium-binding spans 174-210 (NVDDCLMRPCANGATCLDGINRFSCLCPEGFAGRFCT). Residues 212 to 248 (NLDDCASRPCQRGARCRDRVHDFDCLCPSGYGGKTCE) enclose the EGF-like 6; calcium-binding domain. The chain crosses the membrane as a helical span at residues 307–327 (LVALVVFGALTAALVLATVLL). At 328–383 (TLRAWRRGVCPPGPCCYPAPHYAPACQDQECQVSMLPAGLPLPRDLPPEPGKTTAL) the chain is on the cytoplasmic side.

Its subcellular location is the membrane. Regulates adipogenesis. The sequence is that of Protein delta homolog 2 (DLK2) from Homo sapiens (Human).